The chain runs to 194 residues: Putative manganese efflux pump MntP (194 aa).

6 consecutive transmembrane segments (helical) span residues 3-23, 37-57, 65-85, 112-132, 137-157, and 170-190; these read PITI…AAIG, LYVA…GWLL, IAAF…IHMI, LAAT…SLAF, IGIV…FGVM, and AEIV…YEHL.

Belongs to the MntP (TC 9.B.29) family.

The protein resides in the cell inner membrane. In terms of biological role, probably functions as a manganese efflux pump. This Xylella fastidiosa (strain M12) protein is Putative manganese efflux pump MntP.